A 142-amino-acid polypeptide reads, in one-letter code: Large ribosomal subunit protein uL13 (142 aa).

It belongs to the universal ribosomal protein uL13 family. Part of the 50S ribosomal subunit.

This protein is one of the early assembly proteins of the 50S ribosomal subunit, although it is not seen to bind rRNA by itself. It is important during the early stages of 50S assembly. The protein is Large ribosomal subunit protein uL13 of Serratia proteamaculans (strain 568).